Here is a 232-residue protein sequence, read N- to C-terminus: Enolase-phosphatase E1 (232 aa).

Belongs to the HAD-like hydrolase superfamily. MasA/MtnC family. In terms of assembly, monomer. The cofactor is Mg(2+).

The enzyme catalyses 5-methylsulfanyl-2,3-dioxopentyl phosphate + H2O = 1,2-dihydroxy-5-(methylsulfanyl)pent-1-en-3-one + phosphate. It participates in amino-acid biosynthesis; L-methionine biosynthesis via salvage pathway; L-methionine from S-methyl-5-thio-alpha-D-ribose 1-phosphate: step 3/6. Its pathway is amino-acid biosynthesis; L-methionine biosynthesis via salvage pathway; L-methionine from S-methyl-5-thio-alpha-D-ribose 1-phosphate: step 4/6. Bifunctional enzyme that catalyzes the enolization of 2,3-diketo-5-methylthiopentyl-1-phosphate (DK-MTP-1-P) into the intermediate 2-hydroxy-3-keto-5-methylthiopentenyl-1-phosphate (HK-MTPenyl-1-P), which is then dephosphorylated to form the acireductone 1,2-dihydroxy-3-keto-5-methylthiopentene (DHK-MTPene). The protein is Enolase-phosphatase E1 of Xylella fastidiosa (strain 9a5c).